A 164-amino-acid chain; its full sequence is Lipocalin-like 1 protein (164 aa).

This sequence belongs to the calycin superfamily. Lipocalin family.

This chain is Lipocalin-like 1 protein (LCNL1), found in Homo sapiens (Human).